Reading from the N-terminus, the 356-residue chain is Cytochrome b translation regulator cbp7 (356 aa).

Component of a complex, at least composed of cbp7 and cbp8.

It localises to the mitochondrion. Functionally, translation factor for cob1/cytochrome b; plays a role in cob1 mRNA stabilization and required for correct folding of the protein. The chain is Cytochrome b translation regulator cbp7 from Schizosaccharomyces pombe (strain 972 / ATCC 24843) (Fission yeast).